Reading from the N-terminus, the 752-residue chain is uncharacterized protein (752 aa).

Ser202 and Ser582 each carry phosphoserine. Positions 596-752 (EEEKESVEVE…KTGEDGEIVL (157 aa)) are disordered. Composition is skewed to basic and acidic residues over residues 601–613 (SVEVEEGKHKNDL) and 641–677 (LKSEDDNTSEASKDPSSHVKSPENIEKLKQNDDHFEV). The segment covering 695 to 718 (NNVAETILEVTSSPKSSENSQKQS) has biased composition (polar residues). Residues Ser707 and Ser738 each carry the phosphoserine modification.

This is an uncharacterized protein from Schizosaccharomyces pombe (strain 972 / ATCC 24843) (Fission yeast).